Reading from the N-terminus, the 490-residue chain is Homoserine O-acetyltransferase (490 aa).

One can recognise an AB hydrolase-1 domain in the interval asparagine 47–glutamate 355. The active-site Nucleophile is the serine 152. Arginine 222 contributes to the substrate binding site. Active-site residues include aspartate 316 and histidine 349. Aspartate 350 contacts substrate. CBS domains lie at methionine 376–valine 436 and methionine 437–tyrosine 490.

It belongs to the AB hydrolase superfamily. MetX family. Homodimer.

It is found in the cytoplasm. It carries out the reaction L-homoserine + acetyl-CoA = O-acetyl-L-homoserine + CoA. Its pathway is amino-acid biosynthesis; L-methionine biosynthesis via de novo pathway; O-acetyl-L-homoserine from L-homoserine: step 1/1. In terms of biological role, transfers an acetyl group from acetyl-CoA to L-homoserine, forming acetyl-L-homoserine. This chain is Homoserine O-acetyltransferase, found in Methanobrevibacter ruminantium (strain ATCC 35063 / DSM 1093 / JCM 13430 / OCM 146 / M1) (Methanobacterium ruminantium).